The sequence spans 129 residues: Histone H2B.1 (129 aa).

Over residues 1–19 (MAPKAEKKPASKAPAEKKP) the composition is skewed to basic and acidic residues. The interval 1 to 37 (MAPKAEKKPASKAPAEKKPAAKKTASTDSKKRTKTRK) is disordered. N6-acetyllysine; alternate is present on residues Lys7 and Lys8. Residues Lys7 and Lys8 each participate in a glycyl lysine isopeptide (Lys-Gly) (interchain with G-Cter in SUMO); alternate cross-link. A Phosphoserine modification is found at Ser11. The residue at position 12 (Lys12) is an N6-acetyllysine. N6-acetyllysine; alternate is present on Lys17. Lys17 participates in a covalent cross-link: Glycyl lysine isopeptide (Lys-Gly) (interchain with G-Cter in SUMO); alternate. A Glycyl lysine isopeptide (Lys-Gly) (interchain with G-Cter in SUMO) cross-link involves residue Lys18. A Glycyl lysine isopeptide (Lys-Gly) (interchain with G-Cter in ubiquitin) cross-link involves residue Lys123.

This sequence belongs to the histone H2B family. As to quaternary structure, the nucleosome is a histone octamer containing two molecules each of H2A, H2B, H3 and H4 assembled in one H3-H4 heterotetramer and two H2A-H2B heterodimers. The octamer wraps approximately 147 bp of DNA. Monoubiquitinated by the UBC2-BRE1 complex to form H2BK123ub1. H2BK123ub1 gives a specific tag for epigenetic transcriptional activation and is also prerequisite for H3K4me and H3K79me formation. H2BK123ub1 also modulates the formation of double-strand breaks during meiosis and is a prerequisite for DNA-damage checkpoint activation. Post-translationally, phosphorylated by STE20 to form H2BS10ph during progression through meiotic prophase. May be correlated with chromosome condensation. In terms of processing, acetylated by GCN5 to form H2BK11ac and H2BK16ac. H2BK16ac can also be formed by ESA1. Acetylation of N-terminal lysines and particularly formation of H2BK11acK16ac has a positive effect on transcription. Sumoylation to form H2BK6su or H2BK7su, and probably also H2BK16su or H2BK17su, occurs preferentially near the telomeres and represses gene transcription.

It is found in the nucleus. The protein localises to the chromosome. Core component of nucleosome. Nucleosomes wrap and compact DNA into chromatin, limiting DNA accessibility to the cellular machineries which require DNA as a template. Histones thereby play a central role in transcription regulation, DNA repair, DNA replication and chromosomal stability. DNA accessibility is regulated via a complex set of post-translational modifications of histones, also called histone code, and nucleosome remodeling. The sequence is that of Histone H2B.1 (HTB1) from Meyerozyma guilliermondii (strain ATCC 6260 / CBS 566 / DSM 6381 / JCM 1539 / NBRC 10279 / NRRL Y-324) (Yeast).